The primary structure comprises 170 residues: Peptidyl-prolyl cis-trans isomerase-like 3 (170 aa).

The 160-residue stretch at 1–160 folds into the PPIase cyclophilin-type domain; the sequence is MSVTLHTDLG…QEFRIKSVTI (160 aa).

This sequence belongs to the cyclophilin-type PPIase family. PPIL3 subfamily.

The catalysed reaction is [protein]-peptidylproline (omega=180) = [protein]-peptidylproline (omega=0). In terms of biological role, PPIases accelerate the folding of proteins. It catalyzes the cis-trans isomerization of proline imidic peptide bonds in oligopeptides. The sequence is that of Peptidyl-prolyl cis-trans isomerase-like 3 (cyp4) from Rhizopus delemar (strain RA 99-880 / ATCC MYA-4621 / FGSC 9543 / NRRL 43880) (Mucormycosis agent).